The primary structure comprises 458 residues: UDP-N-acetylmuramoylalanine--D-glutamate ligase (458 aa).

124 to 130 is a binding site for ATP; that stretch reads GSDGKTT.

It belongs to the MurCDEF family.

The protein localises to the cytoplasm. It carries out the reaction UDP-N-acetyl-alpha-D-muramoyl-L-alanine + D-glutamate + ATP = UDP-N-acetyl-alpha-D-muramoyl-L-alanyl-D-glutamate + ADP + phosphate + H(+). It participates in cell wall biogenesis; peptidoglycan biosynthesis. Its function is as follows. Cell wall formation. Catalyzes the addition of glutamate to the nucleotide precursor UDP-N-acetylmuramoyl-L-alanine (UMA). The sequence is that of UDP-N-acetylmuramoylalanine--D-glutamate ligase from Clostridium beijerinckii (strain ATCC 51743 / NCIMB 8052) (Clostridium acetobutylicum).